The chain runs to 309 residues: Probable manganese-dependent inorganic pyrophosphatase (309 aa).

Histidine 9, aspartate 13, aspartate 15, aspartate 75, histidine 97, and aspartate 149 together coordinate Mn(2+).

The protein belongs to the PPase class C family. Mn(2+) is required as a cofactor.

Its subcellular location is the cytoplasm. It carries out the reaction diphosphate + H2O = 2 phosphate + H(+). In Lactiplantibacillus plantarum (strain ATCC BAA-793 / NCIMB 8826 / WCFS1) (Lactobacillus plantarum), this protein is Probable manganese-dependent inorganic pyrophosphatase.